The following is an 887-amino-acid chain: Pyruvate dehydrogenase E1 component (887 aa).

Positions 231, 261, and 263 each coordinate Mg(2+). K716 is subject to N6-acetyllysine.

Homodimer. Part of the PDH complex, consisting of multiple copies of pyruvate dehydrogenase (E1), dihydrolipoamide acetyltransferase (E2) and lipoamide dehydrogenase (E3). Requires Mg(2+) as cofactor. The cofactor is thiamine diphosphate.

The catalysed reaction is N(6)-[(R)-lipoyl]-L-lysyl-[protein] + pyruvate + H(+) = N(6)-[(R)-S(8)-acetyldihydrolipoyl]-L-lysyl-[protein] + CO2. Its function is as follows. Component of the pyruvate dehydrogenase (PDH) complex, that catalyzes the overall conversion of pyruvate to acetyl-CoA and CO(2). This chain is Pyruvate dehydrogenase E1 component (aceE), found in Escherichia coli O157:H7.